A 340-amino-acid chain; its full sequence is Phospho-N-acetylmuramoyl-pentapeptide-transferase (340 aa).

Helical transmembrane passes span 24 to 44 (VPFG…LPVL), 69 to 89 (TMGG…GSGW), 95 to 115 (AVAL…WLVI), 129 to 149 (LLLQ…QGIP), 156 to 176 (GIGA…VLVG), 196 to 216 (ALVL…LVAF), 235 to 255 (LFMG…LALL), 260 to 280 (WALA…ILQV), and 316 to 336 (VVGC…AWWH).

This sequence belongs to the glycosyltransferase 4 family. MraY subfamily. Mg(2+) is required as a cofactor.

It is found in the cell inner membrane. It carries out the reaction UDP-N-acetyl-alpha-D-muramoyl-L-alanyl-gamma-D-glutamyl-meso-2,6-diaminopimeloyl-D-alanyl-D-alanine + di-trans,octa-cis-undecaprenyl phosphate = di-trans,octa-cis-undecaprenyl diphospho-N-acetyl-alpha-D-muramoyl-L-alanyl-D-glutamyl-meso-2,6-diaminopimeloyl-D-alanyl-D-alanine + UMP. The protein operates within cell wall biogenesis; peptidoglycan biosynthesis. Catalyzes the initial step of the lipid cycle reactions in the biosynthesis of the cell wall peptidoglycan: transfers peptidoglycan precursor phospho-MurNAc-pentapeptide from UDP-MurNAc-pentapeptide onto the lipid carrier undecaprenyl phosphate, yielding undecaprenyl-pyrophosphoryl-MurNAc-pentapeptide, known as lipid I. This chain is Phospho-N-acetylmuramoyl-pentapeptide-transferase, found in Synechococcus sp. (strain JA-3-3Ab) (Cyanobacteria bacterium Yellowstone A-Prime).